A 324-amino-acid polypeptide reads, in one-letter code: Uric acid degradation bifunctional protein TTL (324 aa).

Residue A2 is modified to N-acetylalanine. Residues 2 to 29 (AMEIGEDEWKVCCGSSEFAKQMSTSGPL) form a required for BRI1-binding region. The OHCU decarboxylase stretch occupies residues 2–161 (AMEIGEDEWK…LRMAKLFSDK (160 aa)). The active-site Proton donor; for OHCU decarboxylase activity is the H58. The (S)-allantoin site is built by H58, P59, E80, F111, I113, and A115. An HIU hydrolase region spans residues 178–324 (KPQDRLRIIG…PFSFSTYRGS (147 aa)). The short motif at 182-190 (RLRIIGGHL) is the Internal peroxisomal targeting signal (PTS2) element.

This sequence in the N-terminal section; belongs to the OHCU decarboxylase family. It in the C-terminal section; belongs to the transthyretin family. 5-hydroxyisourate hydrolase subfamily. In terms of assembly, homodimer. Forms tetramers. Interacts with BRI1 in a kinase-dependent manner. Interacts with B1L. Phosphorylated by BRI1 in vitro. In terms of tissue distribution, expressed ubiquitously with highest levels in flowers buds and elongating inflorescences. As to expression, mainly expressed in stems and leaves, and, to a lower extent, in flowers, flower buds and seedlings. Strongly expressed in flower buds and leaves, to a lower extent in stems, and at low levels in seedlings and flowers.

It localises to the cell membrane. The protein localises to the peroxisome. It is found in the cytoplasm. Its subcellular location is the cytosol. The enzyme catalyses 5-hydroxyisourate + H2O = 5-hydroxy-2-oxo-4-ureido-2,5-dihydro-1H-imidazole-5-carboxylate + H(+). The catalysed reaction is 5-hydroxy-2-oxo-4-ureido-2,5-dihydro-1H-imidazole-5-carboxylate + H(+) = (S)-allantoin + CO2. The protein operates within purine metabolism; urate degradation; (S)-allantoin from urate: step 2/3. It functions in the pathway purine metabolism; urate degradation; (S)-allantoin from urate: step 3/3. Functionally, involved in the last two steps of the degradation of uric acid, i.e. the hydrolysis of 5-hydroxyisourate (HIU) to 2-oxo-4-hydroxy-4-carboxy-5-ureidoimidazoline (OHCU) and its stereoselective decarboxylation to (S)-allantoin, a major ureide compound. Might function as a negative regulator to modulate brassinosteroid-mediated plant growth. Together with B1L, prevents plant growth and development, but by opposition to B1L, negatively regulates cold tolerance, probably in a brassinosteroid (BR) and allantoin-dependent manner. The polypeptide is Uric acid degradation bifunctional protein TTL (Arabidopsis thaliana (Mouse-ear cress)).